We begin with the raw amino-acid sequence, 215 residues long: Elongation factor Ts (215 aa).

Positions 80-83 (TDFV) are involved in Mg(2+) ion dislocation from EF-Tu.

This sequence belongs to the EF-Ts family.

The protein localises to the cytoplasm. In terms of biological role, associates with the EF-Tu.GDP complex and induces the exchange of GDP to GTP. It remains bound to the aminoacyl-tRNA.EF-Tu.GTP complex up to the GTP hydrolysis stage on the ribosome. The polypeptide is Elongation factor Ts (Alkaliphilus metalliredigens (strain QYMF)).